The chain runs to 246 residues: Phosphate import ATP-binding protein PstB (246 aa).

The ABC transporter domain occupies 3-241; sequence AKTTNLNLFY…PKQEKTKAYL (239 aa). An ATP-binding site is contributed by 35 to 42; sequence GASGCGKS.

The protein belongs to the ABC transporter superfamily. Phosphate importer (TC 3.A.1.7) family. The complex is composed of two ATP-binding proteins (PstB), two transmembrane proteins (PstC and PstA) and a solute-binding protein (PstS).

Its subcellular location is the cell inner membrane. The enzyme catalyses phosphate(out) + ATP + H2O = ADP + 2 phosphate(in) + H(+). Functionally, part of the ABC transporter complex PstSACB involved in phosphate import. Responsible for energy coupling to the transport system. The sequence is that of Phosphate import ATP-binding protein PstB from Campylobacter jejuni subsp. jejuni serotype O:2 (strain ATCC 700819 / NCTC 11168).